A 375-amino-acid chain; its full sequence is o-succinylbenzoate synthase (375 aa).

The active-site Proton donor is the lysine 166. Residues aspartate 191, glutamate 216, and aspartate 241 each contribute to the Mg(2+) site. Lysine 265 serves as the catalytic Proton acceptor.

The protein belongs to the mandelate racemase/muconate lactonizing enzyme family. MenC type 2 subfamily. In terms of assembly, homotetramer. A divalent metal cation is required as a cofactor.

The enzyme catalyses (1R,6R)-6-hydroxy-2-succinyl-cyclohexa-2,4-diene-1-carboxylate = 2-succinylbenzoate + H2O. It catalyses the reaction N-acetyl-D-methionine = N-acetyl-L-methionine. It participates in quinol/quinone metabolism; 1,4-dihydroxy-2-naphthoate biosynthesis; 1,4-dihydroxy-2-naphthoate from chorismate: step 4/7. It functions in the pathway quinol/quinone metabolism; menaquinone biosynthesis. Converts 2-succinyl-6-hydroxy-2,4-cyclohexadiene-1-carboxylate (SHCHC) to 2-succinylbenzoate (OSB). Also acts as a N-succinylamino acid racemase (NSAR) that catalyzes the racemization of N-succinyl-D/L-phenylalanine. Can catalyze the racemization of a broad range of N-acylamino acids, including N-acetyl-D-methionine, N-formyl-D/L-methionine, N-formyl-D/L-norleucine, N-formyl-D/L-aminobutyric acid, N-formyl-D/L-norvaline, N-formyl-D/L-homophenylalanine, N-carbamoyl-D-methionine and N-carbamoyl-D-norleucine. May be a bifunctional enzyme involved in menaquinone biosynthesis and in an irreversible pathway for the conversion of D- to L-amino acids, thereby facilitating the survival and/or growth of the organism. This Geobacillus stearothermophilus (Bacillus stearothermophilus) protein is o-succinylbenzoate synthase.